A 440-amino-acid polypeptide reads, in one-letter code: Thymidine phosphorylase (440 aa).

The protein belongs to the thymidine/pyrimidine-nucleoside phosphorylase family. As to quaternary structure, homodimer.

The catalysed reaction is thymidine + phosphate = 2-deoxy-alpha-D-ribose 1-phosphate + thymine. The protein operates within pyrimidine metabolism; dTMP biosynthesis via salvage pathway; dTMP from thymine: step 1/2. Its function is as follows. The enzymes which catalyze the reversible phosphorolysis of pyrimidine nucleosides are involved in the degradation of these compounds and in their utilization as carbon and energy sources, or in the rescue of pyrimidine bases for nucleotide synthesis. This Serratia proteamaculans (strain 568) protein is Thymidine phosphorylase.